A 65-amino-acid polypeptide reads, in one-letter code: Toxin Cbo5 (65 aa).

In terms of domain architecture, LCN-type CS-alpha/beta spans 2-65 (KDGYLVDKTG…QTWPLPNKSC (64 aa)). 4 disulfide bridges follow: Cys12–Cys65, Cys16–Cys41, Cys25–Cys46, and Cys29–Cys48.

The protein belongs to the long (4 C-C) scorpion toxin superfamily. Sodium channel inhibitor family. Beta subfamily. Expressed by the venom gland.

It is found in the secreted. In terms of biological role, a probable toxin that has no activity on the tested sodium channels (when tested at 200 nM) and is not toxic to mice, crickets or sweet water shrimps. It resembles Beta toxins that bind voltage-independently at site-4 of sodium channels and shift the voltage of activation toward more negative potentials, thereby affecting sodium channel activation and promoting spontaneous and repetitive firing. In Centruroides bonito (Scorpion), this protein is Toxin Cbo5.